The chain runs to 504 residues: Glutamate--tRNA ligase (504 aa).

The 'HIGH' region motif lies at 25–35 (PSPTGNPHVGL). Zn(2+) contacts are provided by cysteine 122, cysteine 124, cysteine 149, and glutamate 151. The 'KMSKS' region motif lies at 270–274 (KLSKR). Lysine 273 contacts ATP.

It belongs to the class-I aminoacyl-tRNA synthetase family. Glutamate--tRNA ligase type 1 subfamily. Monomer. Zn(2+) is required as a cofactor.

It localises to the cytoplasm. It catalyses the reaction tRNA(Glu) + L-glutamate + ATP = L-glutamyl-tRNA(Glu) + AMP + diphosphate. Catalyzes the attachment of glutamate to tRNA(Glu) in a two-step reaction: glutamate is first activated by ATP to form Glu-AMP and then transferred to the acceptor end of tRNA(Glu). The sequence is that of Glutamate--tRNA ligase from Streptomyces avermitilis (strain ATCC 31267 / DSM 46492 / JCM 5070 / NBRC 14893 / NCIMB 12804 / NRRL 8165 / MA-4680).